Here is a 468-residue protein sequence, read N- to C-terminus: MQAAPSLRRASCLLLAAILDLARGYLTVNIEPLPPVVAGDAVTLKCNFKTDGRMREIVWYRVTDGGTIKQKIFTFDAMFSTNYSHMENYRKREDLVYQSTVRLPEVRISDNGPYECHVGIYDRATREKVVLASGNIFLNVMAPPTSIEVVAADSPAPFSRYQAQNFTLVCIVSGGKPAPMVYFKRDGEPIDAVPLTELPAASSGPVQDSRPFRSLLHRDVDDTKMQKSLSLLDTEYRAGRPYTERPARSLTQDPSLFVQPTTENIPETVVSREFPRWVHSAEPVYFLRHSRTPGSDGTVEVRALLTWTLNPQIDNEALFSCEVKHPALSMPMQAEVTLVAPKGPKIMMTPSRARVGDTVRILVHGFQNEVFPEPMFTWTRVGSRLLDGSAEFDGKELVLERVPAELNGSMYRCTAQNPLGSTDTHTRLIVFENPNIPRGTEDSRGSASGPAGVRLTLVLALTVILELT.

Residues 1–24 (MQAAPSLRRASCLLLAAILDLARG) form the signal peptide. One can recognise an Ig-like 1 domain in the interval 25–132 (YLTVNIEPLP…RATREKVVLA (108 aa)). C46 and C116 form a disulfide bridge. Residues N82, N165, and N407 are each glycosylated (N-linked (GlcNAc...) asparagine). One can recognise an Ig-like 2 domain in the interval 344–429 (PKIMMTPSRA…GSTDTHTRLI (86 aa)).

As to quaternary structure, interacts (Ig-like 1 domain) with NRXN2 (via Laminin G-like 1 domain) in a trans-interaction manner. As to expression, expressed in brain (at protein levels). Highly expressed in the pyramidal cell layer of the dorsal and ventral hippocampal CA1 and CA3 regions, layers 5 and 6 of the cortex, the thalamus and the pons and weakly expressed in the cerebellum. Expressed in neurons but not in glia.

The protein resides in the postsynaptic cell membrane. Involved in synaptic inhibition in the brain. Selectively regulates inhibitory presynaptic differentiation through interacting with presynaptic NRXN2. The chain is Immunoglobulin superfamily member 21 (Igsf21) from Mus musculus (Mouse).